A 76-amino-acid chain; its full sequence is uncharacterized protein (76 aa).

The tract at residues 1-24 (MPLRLCQGRKDRASDPVRDDGSPP) is disordered. Residues 8–22 (GRKDRASDPVRDDGS) are compositionally biased toward basic and acidic residues.

This is an uncharacterized protein from Dryophytes versicolor (chameleon treefrog).